Consider the following 135-residue polypeptide: Small ribosomal subunit protein eS24A (135 aa).

Ser-2 is subject to N-acetylserine. Ser-14 carries the post-translational modification Phosphoserine. Lys-21 is covalently cross-linked (Glycyl lysine isopeptide (Lys-Gly) (interchain with G-Cter in ubiquitin)). At Ser-56 the chain carries Phosphoserine. The interval 102-135 (KASRQQRKQKKNRDKKIFGTGKRLAKKVARRNAD) is disordered. 2 stretches are compositionally biased toward basic residues: residues 105-115 (RQQRKQKKNRD) and 124-135 (RLAKKVARRNAD).

It belongs to the eukaryotic ribosomal protein eS24 family. Component of the small ribosomal subunit (SSU). Mature yeast ribosomes consist of a small (40S) and a large (60S) subunit. The 40S small subunit contains 1 molecule of ribosomal RNA (18S rRNA) and 33 different proteins (encoded by 57 genes). The large 60S subunit contains 3 rRNA molecules (25S, 5.8S and 5S rRNA) and 46 different proteins (encoded by 81 genes). In terms of processing, N-terminally acetylated by acetyltransferase NatA. Also partially acetylated by NatC.

The protein resides in the cytoplasm. In terms of biological role, component of the ribosome, a large ribonucleoprotein complex responsible for the synthesis of proteins in the cell. The small ribosomal subunit (SSU) binds messenger RNAs (mRNAs) and translates the encoded message by selecting cognate aminoacyl-transfer RNA (tRNA) molecules. The large subunit (LSU) contains the ribosomal catalytic site termed the peptidyl transferase center (PTC), which catalyzes the formation of peptide bonds, thereby polymerizing the amino acids delivered by tRNAs into a polypeptide chain. The nascent polypeptides leave the ribosome through a tunnel in the LSU and interact with protein factors that function in enzymatic processing, targeting, and the membrane insertion of nascent chains at the exit of the ribosomal tunnel. The protein is Small ribosomal subunit protein eS24A of Saccharomyces cerevisiae (strain ATCC 204508 / S288c) (Baker's yeast).